The chain runs to 127 residues: Small ribosomal subunit protein uS11 (127 aa).

It belongs to the universal ribosomal protein uS11 family. In terms of assembly, part of the 30S ribosomal subunit. Interacts with proteins S7 and S18. Binds to IF-3.

In terms of biological role, located on the platform of the 30S subunit, it bridges several disparate RNA helices of the 16S rRNA. Forms part of the Shine-Dalgarno cleft in the 70S ribosome. In Lactococcus lactis subsp. lactis (strain IL1403) (Streptococcus lactis), this protein is Small ribosomal subunit protein uS11.